The sequence spans 203 residues: tRNA (cytidine(56)-2'-O)-methyltransferase (203 aa).

S-adenosyl-L-methionine is bound by residues Leu-80, 109–113, and 127–134; these read GAEKV and IGNQPHSE. The disordered stretch occupies residues 178-203; the sequence is AEQDKAEGKATPGKNWENSGFTGDNP. The span at 193-203 shows a compositional bias: polar residues; sequence WENSGFTGDNP.

Belongs to the aTrm56 family. In terms of assembly, homodimer.

It localises to the cytoplasm. It catalyses the reaction cytidine(56) in tRNA + S-adenosyl-L-methionine = 2'-O-methylcytidine(56) in tRNA + S-adenosyl-L-homocysteine + H(+). Functionally, specifically catalyzes the AdoMet-dependent 2'-O-ribose methylation of cytidine at position 56 in tRNAs. The polypeptide is tRNA (cytidine(56)-2'-O)-methyltransferase (Pyrococcus horikoshii (strain ATCC 700860 / DSM 12428 / JCM 9974 / NBRC 100139 / OT-3)).